A 174-amino-acid chain; its full sequence is Nucleoside-triphosphatase THEP1 (174 aa).

ATP contacts are provided by residues 15–22 (GMPGVGKT) and 102–109 (LAIVDEIG).

It belongs to the THEP1 NTPase family.

The catalysed reaction is a ribonucleoside 5'-triphosphate + H2O = a ribonucleoside 5'-diphosphate + phosphate + H(+). Its function is as follows. Has nucleotide phosphatase activity towards ATP, GTP, CTP, TTP and UTP. May hydrolyze nucleoside diphosphates with lower efficiency. The polypeptide is Nucleoside-triphosphatase THEP1 (Pyrobaculum islandicum (strain DSM 4184 / JCM 9189 / GEO3)).